The following is a 226-amino-acid chain: MYSISFQEDSLLPRERLAKEGVEALSNQELLAILLRTGTRQVSVFEIAQKVLNNLSSLTDLKKMTLQELQSLSGIGRVKAIELQAMIELGHRIHKHETLEMESILSSQKLAKKMQQELGDKKQEHLVALYLNTQNQIIHQQTIFIGSVTRSIAEPREILHYAIKHMATSLILVHNHPSGAVAPSQNDDHVTKLVKEACELMGIVLLDHLIVSHSNYFSYREKTDLI.

Positions 103 to 225 (SILSSQKLAK…YFSYREKTDL (123 aa)) constitute an MPN domain. Residues His-174, His-176, and Asp-187 each contribute to the Zn(2+) site. The JAMM motif signature appears at 174–187 (HNHPSGAVAPSQND).

This sequence belongs to the UPF0758 family.

In Streptococcus pneumoniae (strain JJA), this protein is UPF0758 protein SPJ_1027.